The following is a 1358-amino-acid chain: DNA-directed RNA polymerase subunit beta (1358 aa).

Belongs to the RNA polymerase beta chain family. As to quaternary structure, the RNAP catalytic core consists of 2 alpha, 1 beta, 1 beta' and 1 omega subunit. When a sigma factor is associated with the core the holoenzyme is formed, which can initiate transcription.

The enzyme catalyses RNA(n) + a ribonucleoside 5'-triphosphate = RNA(n+1) + diphosphate. Its function is as follows. DNA-dependent RNA polymerase catalyzes the transcription of DNA into RNA using the four ribonucleoside triphosphates as substrates. In Azotobacter vinelandii (strain DJ / ATCC BAA-1303), this protein is DNA-directed RNA polymerase subunit beta.